The sequence spans 169 residues: Ribosome maturation factor RimM (169 aa).

The region spanning 97–169 (NDEAYFTDLI…KIVVDWEYDY (73 aa)) is the PRC barrel domain.

The protein belongs to the RimM family. In terms of assembly, binds ribosomal protein uS19.

It localises to the cytoplasm. Functionally, an accessory protein needed during the final step in the assembly of 30S ribosomal subunit, possibly for assembly of the head region. Essential for efficient processing of 16S rRNA. May be needed both before and after RbfA during the maturation of 16S rRNA. It has affinity for free ribosomal 30S subunits but not for 70S ribosomes. The protein is Ribosome maturation factor RimM of Francisella philomiragia subsp. philomiragia (strain ATCC 25017 / CCUG 19701 / FSC 153 / O#319-036).